The chain runs to 210 residues: 7-methyl-GTP pyrophosphatase (210 aa).

The Proton acceptor role is filled by Asp79.

It belongs to the Maf family. YceF subfamily. A divalent metal cation is required as a cofactor.

Its subcellular location is the cytoplasm. The catalysed reaction is N(7)-methyl-GTP + H2O = N(7)-methyl-GMP + diphosphate + H(+). Nucleoside triphosphate pyrophosphatase that hydrolyzes 7-methyl-GTP (m(7)GTP). May have a dual role in cell division arrest and in preventing the incorporation of modified nucleotides into cellular nucleic acids. This chain is 7-methyl-GTP pyrophosphatase, found in Burkholderia lata (strain ATCC 17760 / DSM 23089 / LMG 22485 / NCIMB 9086 / R18194 / 383).